Here is a 373-residue protein sequence, read N- to C-terminus: GTP cyclohydrolase 1 type 2 homolog (373 aa).

The a divalent metal cation site is built by His67, His68, Asp106, His333, and Glu336.

Belongs to the GTP cyclohydrolase I type 2/NIF3 family. Homohexamer.

This is GTP cyclohydrolase 1 type 2 homolog from Listeria monocytogenes serovar 1/2a (strain ATCC BAA-679 / EGD-e).